The following is a 1024-amino-acid chain: E3 ISG15--protein ligase HERC5 (1024 aa).

A compositionally biased stretch (basic residues) spans 1–13 (MERRSRRKSRRNG). Residues 1 to 28 (MERRSRRKSRRNGRSTAGKAAATQPAKS) form a disordered region. RCC1 repeat units follow at residues 96–155 (NMKI…ALSK), 156–208 (GGEL…ALSM), 209–260 (SGNI…LLTQ), 262–312 (GLLF…AYVS), and 314–364 (LGKV…LIMI). In terms of domain architecture, HECT spans 702 to 1024 (ENEDLRKELW…EAINNNRGFG (323 aa)). Residue C994 is the Glycyl thioester intermediate of the active site.

In terms of assembly, (Microbial infection) Interacts with human cytomegalovirus protein UL26; this interaction inhibits global protein ISGylation. (Microbial infection) Interacts with Kaposi's sarcoma-associated herpesvirus protein v-IRF1; this interaction inhibits global protein ISGylation. As to quaternary structure, binds to CCNA1, CCNB1, CCND1 and CCNE1. Interacts with UBE2L6. Interacts with IRF3, this interaction is marginal in resting cells but enhanced upon viral infection. Interacts with influenza A virus NS1. In terms of processing, ISGylated. Expressed in testis and to a lesser degree in brain, ovary and placenta. Found in most tissues at low levels.

It is found in the cytoplasm. The protein localises to the perinuclear region. Its function is as follows. Major E3 ligase for ISG15 conjugation. Acts as a positive regulator of innate antiviral response in cells induced by interferon. Functions as part of the ISGylation machinery that recognizes target proteins in a broad and relatively non-specific manner. Catalyzes ISGylation of IRF3 which results in sustained activation, it attenuates IRF3-PIN1 interaction, which antagonizes IRF3 ubiquitination and degradation, and boosts the antiviral response. Mediates ISGylation of the phosphatase PTEN leading to its degradation, thus alleviating its suppression of the PI3K-AKT signaling pathway and promoting the production of cytokines that facilitate bacterial clearance. Interferes with the function of key viral structural proteins such as ebolavirus structural protein VP40 or HIV-1 protein GAG. Catalyzes ISGylation of influenza A viral NS1 which attenuates virulence; ISGylated NS1 fails to form homodimers and thus to interact with its RNA targets. Catalyzes ISGylation of papillomavirus type 16 L1 protein which results in dominant-negative effect on virus infectivity. Physically associated with polyribosomes, broadly modifies newly synthesized proteins in a cotranslational manner. In an interferon-stimulated cell, newly translated viral proteins are primary targets of ISG15. Promotes parkin/PRKN ubiquitin E3 ligase activity by suppressing the intramolecular interaction that maintains its autoinhibited conformation. Functionally, (Microbial infection) Functions as an E3 ligase for ISGylation of hepatitis B virus protein X leading to enhanced viral replication due to increased interferon resistance. The chain is E3 ISG15--protein ligase HERC5 (HERC5) from Homo sapiens (Human).